A 570-amino-acid chain; its full sequence is Probable D-xylulose kinase A (570 aa).

4 residues coordinate substrate: His-95, Arg-166, Asp-282, and Asn-283. Residues Trp-364, 469–470, and Asn-473 contribute to the ATP site; that span reads GG.

Belongs to the FGGY kinase family.

The protein localises to the cytoplasm. The catalysed reaction is D-xylulose + ATP = D-xylulose 5-phosphate + ADP + H(+). Its function is as follows. Highly specific D-xylulose kinase which participates in the catabolism of xylose. Xylose is a major component of hemicelluloses such as xylan. Most fungi utilize D-xylose via three enzymatic reactions, xylose reductase (XR), xylitol dehydrogenase (XDH), and xylulokinase, to form xylulose 5-phosphate, which enters pentose phosphate pathway. The polypeptide is Probable D-xylulose kinase A (xkiA) (Aspergillus niger (strain ATCC MYA-4892 / CBS 513.88 / FGSC A1513)).